A 133-amino-acid polypeptide reads, in one-letter code: ATP synthase epsilon chain (133 aa).

It belongs to the ATPase epsilon chain family. As to quaternary structure, F-type ATPases have 2 components, CF(1) - the catalytic core - and CF(0) - the membrane proton channel. CF(1) has five subunits: alpha(3), beta(3), gamma(1), delta(1), epsilon(1). CF(0) has three main subunits: a, b and c.

It localises to the cell membrane. In terms of biological role, produces ATP from ADP in the presence of a proton gradient across the membrane. The chain is ATP synthase epsilon chain from Staphylococcus haemolyticus (strain JCSC1435).